We begin with the raw amino-acid sequence, 68 residues long: Large ribosomal subunit protein uL30 (68 aa).

It belongs to the universal ribosomal protein uL30 family. Part of the 50S ribosomal subunit.

In Bartonella henselae (strain ATCC 49882 / DSM 28221 / CCUG 30454 / Houston 1) (Rochalimaea henselae), this protein is Large ribosomal subunit protein uL30.